Consider the following 872-residue polypeptide: DNA mismatch repair protein MutS (872 aa).

Position 626–633 (626–633 (GPNMAGKS)) interacts with ATP.

This sequence belongs to the DNA mismatch repair MutS family.

Functionally, this protein is involved in the repair of mismatches in DNA. It is possible that it carries out the mismatch recognition step. This protein has a weak ATPase activity. The protein is DNA mismatch repair protein MutS of Chlorobium phaeobacteroides (strain DSM 266 / SMG 266 / 2430).